Consider the following 600-residue polypeptide: Glutamine--fructose-6-phosphate aminotransferase [isomerizing] (600 aa).

The active-site Nucleophile; for GATase activity is the C2. The Glutamine amidotransferase type-2 domain maps to 2-217 (CGIVGYIGYQ…DGELVIVTSE (216 aa)). SIS domains are found at residues 283–422 (IINE…AKGF) and 452–590 (IASD…VDKP). K595 functions as the For Fru-6P isomerization activity in the catalytic mechanism.

As to quaternary structure, homodimer.

It localises to the cytoplasm. The catalysed reaction is D-fructose 6-phosphate + L-glutamine = D-glucosamine 6-phosphate + L-glutamate. In terms of biological role, catalyzes the first step in hexosamine metabolism, converting fructose-6P into glucosamine-6P using glutamine as a nitrogen source. This chain is Glutamine--fructose-6-phosphate aminotransferase [isomerizing], found in Geobacillus kaustophilus (strain HTA426).